We begin with the raw amino-acid sequence, 64 residues long: Carnocyclin-A (64 aa).

Residues Met-1–Glu-4 constitute a propeptide that is removed on maturation. A cross-link (cyclopeptide (Leu-Leu)) is located at residues Leu-5–Leu-64.

It localises to the secreted. Cyclopeptide antibiotic that inhibits the growth of Gram-positive bacteria, but has no effect on the growth of Gram-negative bacteria. This chain is Carnocyclin-A, found in Carnobacterium maltaromaticum (Carnobacterium piscicola).